We begin with the raw amino-acid sequence, 274 residues long: Penicillin-insensitive murein endopeptidase (274 aa).

The signal sequence occupies residues 1–19; it reads MKKTAIALLAWFVSSASLA. 3 disulfide bridges follow: Cys-44–Cys-265, Cys-187–Cys-235, and Cys-216–Cys-223. Residues His-110, His-113, Asp-120, Asp-147, His-150, and His-211 each contribute to the Zn(2+) site. A disordered region spans residues 225–274; sequence DQPLPPPGDGCGAELQSWFEPPKLGTTKPEKKTPPPLPPSCQALLDEHVL.

Belongs to the peptidase M74 family. In terms of assembly, dimer. Zn(2+) is required as a cofactor.

The protein localises to the periplasm. In terms of biological role, murein endopeptidase that cleaves the D-alanyl-meso-2,6-diamino-pimelyl amide bond that connects peptidoglycan strands. Likely plays a role in the removal of murein from the sacculus. The sequence is that of Penicillin-insensitive murein endopeptidase from Salmonella paratyphi B (strain ATCC BAA-1250 / SPB7).